Here is a 514-residue protein sequence, read N- to C-terminus: uncharacterized protein (514 aa).

Disordered regions lie at residues 1-68 (MSSP…SESE), 109-244 (VPPP…RQAS), and 272-484 (RPAV…AQGC). Residues 368-384 (KPQKPKHSSPGKKPAGR) show a composition bias toward basic residues. The segment covering 385–405 (KTRESQAAAREDNDPNRDEVP) has biased composition (basic and acidic residues).

This is an uncharacterized protein from Homo sapiens (Human).